Here is an 80-residue protein sequence, read N- to C-terminus: uncharacterized protein (80 aa).

This is an uncharacterized protein from Acidianus sp. F28 (AFV-2).